Consider the following 191-residue polypeptide: Chromobox protein homolog 5 (191 aa).

4 positions are modified to phosphoserine: Ser-11, Ser-12, Ser-13, and Ser-14. The Chromo 1 domain maps to Tyr-20–Asn-78. Residue Lys-32 forms a Glycyl lysine isopeptide (Lys-Gly) (interchain with G-Cter in SUMO2) linkage. An N6-acetyllysine modification is found at Lys-40. The interval Tyr-70 to Phe-117 is disordered. The segment covering Met-73–Lys-89 has biased composition (basic and acidic residues). Residue Lys-91 forms a Glycyl lysine isopeptide (Lys-Gly) (interchain with G-Cter in SUMO2) linkage. Residues Ser-92, Ser-95, and Ser-97 each carry the phosphoserine modification. Residues Lys-102, Lys-106, Lys-154, and Lys-184 each participate in a glycyl lysine isopeptide (Lys-Gly) (interchain with G-Cter in SUMO2) cross-link. Residues Leu-121–Glu-179 enclose the Chromo 2; shadow subtype domain.

Homodimer. Interacts with histone H3 methylated at 'Lys-9'. Interacts (via Chromo 2; shadow subtype domain) with the MIS12 complex subunit NSL1; the interaction is direct, involves dimeric CBX5, and occurs during interphase. Interacts with POGZ; POGZ and PXVXL motif-containing proteins such as INCENP and TRIM28 compete for interaction with CBX5. Interacts with LRIF1 (via PxVxL motif). Interacts with INCENP. Interacts with TRIM24. Interacts (via the chromoshadow domain) with ATRX; the interaction is direct. Interacts (via the chromoshadow domain) with CHAF1A; the interaction is direct. Interacts (via the chromoshadow domain) with LBR; the interaction is direct. Interacts (via the chromoshadow domain) with NIPBL; the interaction is direct. Interacts (via the chromoshadow domain) with SP100; the interaction is direct. Interacts (via the chromoshadow domain) with STAM2; the interaction is direct. Interacts (via the chromoshadow domain) with TRIM28; the interaction is direct. Interacts (via the chromoshadow domain) with CBX3; the interaction is direct. Interacts with PRR14 (via N-terminus). Interacts with RRP1B. Interacts with HNRNPU (via C-terminus); this interaction is, at least in part, RNA-dependent. Interacts with ZNF263; recruited to the SIX3 promoter along with other proteins involved in chromatin modification and transcriptional corepression where it contributes to transcriptional repression. Interacts with AURKB during mitosis. Interacts with CHAMP1. Interacts with BAHD1. Interacts with HP1BP3. Interacts with CHD3. Interacts with CHD4. Interacts with SMYD5. Interacts with KMT5B. Interacts with KMT5C. As to quaternary structure, (Microbial infection) Interacts with JC virus agnoprotein; this interaction induces the dissociation of CBX5 from LBR, resulting in destabilization of the nuclear envelope. In terms of processing, phosphorylation of HP1 and LBR may be responsible for some of the alterations in chromatin organization and nuclear structure which occur at various times during the cell cycle. Phosphorylated during interphase and possibly hyper-phosphorylated during mitosis. Ubiquitinated.

The protein resides in the nucleus. The protein localises to the chromosome. It localises to the centromere. In terms of biological role, component of heterochromatin that recognizes and binds histone H3 tails methylated at 'Lys-9' (H3K9me), leading to epigenetic repression. In contrast, it is excluded from chromatin when 'Tyr-41' of histone H3 is phosphorylated (H3Y41ph). May contribute to the association of heterochromatin with the inner nuclear membrane by interactions with the lamin-B receptor (LBR). Involved in the formation of kinetochore through interaction with the MIS12 complex subunit NSL1. Required for the formation of the inner centromere. This chain is Chromobox protein homolog 5 (CBX5), found in Homo sapiens (Human).